A 152-amino-acid polypeptide reads, in one-letter code: 3-dehydroquinate dehydratase (152 aa).

The Proton acceptor role is filled by Tyr-26. The substrate site is built by Asn-78, His-84, and Asp-91. The active-site Proton donor is His-104. Substrate is bound by residues 105–106 (IS) and Arg-115.

It belongs to the type-II 3-dehydroquinase family. As to quaternary structure, homododecamer.

The catalysed reaction is 3-dehydroquinate = 3-dehydroshikimate + H2O. The protein operates within metabolic intermediate biosynthesis; chorismate biosynthesis; chorismate from D-erythrose 4-phosphate and phosphoenolpyruvate: step 3/7. Functionally, catalyzes a trans-dehydration via an enolate intermediate. The polypeptide is 3-dehydroquinate dehydratase (Buchnera aphidicola subsp. Cinara cedri (strain Cc)).